Here is a 236-residue protein sequence, read N- to C-terminus: Ribosomal RNA small subunit methyltransferase G (236 aa).

Residues Gly-80, 131–132, and Arg-148 contribute to the S-adenosyl-L-methionine site; that span reads AE.

Belongs to the methyltransferase superfamily. RNA methyltransferase RsmG family.

The protein localises to the cytoplasm. Functionally, specifically methylates the N7 position of a guanine in 16S rRNA. This chain is Ribosomal RNA small subunit methyltransferase G, found in Ureaplasma parvum serovar 3 (strain ATCC 27815 / 27 / NCTC 11736).